The sequence spans 784 residues: Probable phosphoketolase (784 aa).

This sequence belongs to the XFP family. Requires thiamine diphosphate as cofactor.

The sequence is that of Probable phosphoketolase from Rhodopseudomonas palustris (strain BisB5).